A 262-amino-acid chain; its full sequence is 2-aminoethylphosphonate dioxygenase (262 aa).

A 2-oxoglutarate-binding site is contributed by Lys108. Fe cation-binding residues include His118, Asp120, and His198.

It belongs to the PhyH family. It depends on Fe(2+) as a cofactor.

The enzyme catalyses (2-aminoethyl)phosphonate + 2-oxoglutarate + O2 = (1R)-(2-amino-1-hydroxyethyl)phosphonate + succinate + CO2. Activity is enhanced by ascorbate. Functionally, involved in the degradation of the organophosphonate 2-aminoethylphosphonic acid (2-AEP). Catalyzes the hydroxylation of 2-aminoethylphosphonic acid to yield (2-amino-1-hydroxyethyl)phosphonic acid. The chain is 2-aminoethylphosphonate dioxygenase from Uncultured bacterium HF130_AEPn_1.